Consider the following 248-residue polypeptide: NAD-dependent protein deacylase 2 (248 aa).

In terms of domain architecture, Deacetylase sirtuin-type spans 1–248; that stretch reads MLQAASALRH…HVMAELISHI (248 aa). Residues 19-38 and 102-105 contribute to the NAD(+) site; these read GAGLSADSGLPTYRGVGGLY and QNVD. His-122 serves as the catalytic Proton acceptor. Cys-130, Cys-133, Cys-152, and Cys-155 together coordinate Zn(2+). NAD(+)-binding positions include 193-195, 219-221, and Ala-237; these read GTT and NPQ.

This sequence belongs to the sirtuin family. Class III subfamily. The cofactor is Zn(2+).

It is found in the cytoplasm. The catalysed reaction is N(6)-acetyl-L-lysyl-[protein] + NAD(+) + H2O = 2''-O-acetyl-ADP-D-ribose + nicotinamide + L-lysyl-[protein]. Its function is as follows. NAD-dependent protein deacetylase which modulates the activities of several proteins which are inactive in their acetylated form. In Pseudomonas syringae pv. tomato (strain ATCC BAA-871 / DC3000), this protein is NAD-dependent protein deacylase 2 (cobB2).